A 720-amino-acid polypeptide reads, in one-letter code: Methionine--tRNA ligase (720 aa).

The short motif at 27 to 37 is the 'HIGH' region element; it reads PYANGQIHIGH. C158, C161, C171, and C174 together coordinate Zn(2+). The 'KMSKS' region signature appears at 348–352; the sequence is KMSKS. Residue K351 participates in ATP binding. In terms of domain architecture, tRNA-binding spans 614–720; the sequence is DFAKIDLRIA…SGAKPGMRVK (107 aa).

The protein belongs to the class-I aminoacyl-tRNA synthetase family. MetG type 1 subfamily. In terms of assembly, homodimer. Zn(2+) is required as a cofactor.

The protein resides in the cytoplasm. It carries out the reaction tRNA(Met) + L-methionine + ATP = L-methionyl-tRNA(Met) + AMP + diphosphate. In terms of biological role, is required not only for elongation of protein synthesis but also for the initiation of all mRNA translation through initiator tRNA(fMet) aminoacylation. In Burkholderia lata (strain ATCC 17760 / DSM 23089 / LMG 22485 / NCIMB 9086 / R18194 / 383), this protein is Methionine--tRNA ligase.